The sequence spans 255 residues: Myogenic factor 5 (255 aa).

Positions aspartate 83–leucine 134 constitute a bHLH domain. The segment at serine 217 to arginine 249 is disordered. The segment covering proline 232 to arginine 249 has biased composition (polar residues).

In terms of assembly, efficient DNA binding requires dimerization with another bHLH protein.

Its subcellular location is the nucleus. In terms of biological role, acts as a transcriptional activator that promotes transcription of muscle-specific target genes and plays a role in muscle differentiation. Together with MYOG and MYOD1, co-occupies muscle-specific gene promoter core region during myogenesis. Induces fibroblasts to differentiate into myoblasts. Probable sequence specific DNA-binding protein. This chain is Myogenic factor 5 (MYF5), found in Bos taurus (Bovine).